The primary structure comprises 567 residues: Phenylalanine--tRNA ligase beta subunit (567 aa).

Residues 284 to 359 (FAVRTKHVSH…RAYDFNDLTP (76 aa)) form the B5 domain. Positions 337, 343, 346, and 347 each coordinate Mg(2+).

Belongs to the phenylalanyl-tRNA synthetase beta subunit family. Type 2 subfamily. In terms of assembly, tetramer of two alpha and two beta subunits. Mg(2+) serves as cofactor.

It localises to the cytoplasm. The enzyme catalyses tRNA(Phe) + L-phenylalanine + ATP = L-phenylalanyl-tRNA(Phe) + AMP + diphosphate + H(+). The sequence is that of Phenylalanine--tRNA ligase beta subunit from Halobacterium salinarum (strain ATCC 29341 / DSM 671 / R1).